The following is a 165-amino-acid chain: E3 ubiquitin ligase complex SCF subunit sconC (165 aa).

An interaction with the F-box domain of F-box proteins region spans residues 106-165 (ILAANYLDIKALLDVGCKTVANMIKGKSPEEIRKTFNIQNDFTPEEEDQIRRENEWAEDR).

The protein belongs to the SKP1 family. In terms of assembly, component of the SCF (SKP1-CUL1-F-box protein) E3 ubiquitin ligase complexes.

Its pathway is protein modification; protein ubiquitination. In terms of biological role, essential component of the SCF (SKP1-CUL1-F-box protein) E3 ubiquitin ligase complexes, which mediate the ubiquitination and subsequent proteasomal degradation of target proteins. Controls sulfur metabolite repression, probably by mediating the inactivation or degradation of the metR transcription factor. The polypeptide is E3 ubiquitin ligase complex SCF subunit sconC (sconC) (Arthroderma otae (strain ATCC MYA-4605 / CBS 113480) (Microsporum canis)).